The primary structure comprises 252 residues: 4-hydroxy-tetrahydrodipicolinate reductase (252 aa).

NAD(+) contacts are provided by residues 8–13, 84–86, and 108–111; these read GCCGKM, CST, and SANM. Catalysis depends on His-141, which acts as the Proton donor/acceptor. His-142 provides a ligand contact to (S)-2,3,4,5-tetrahydrodipicolinate. Residue Lys-145 is the Proton donor of the active site. 151–152 serves as a coordination point for (S)-2,3,4,5-tetrahydrodipicolinate; sequence GT.

The protein belongs to the DapB family.

The protein resides in the cytoplasm. The enzyme catalyses (S)-2,3,4,5-tetrahydrodipicolinate + NAD(+) + H2O = (2S,4S)-4-hydroxy-2,3,4,5-tetrahydrodipicolinate + NADH + H(+). It carries out the reaction (S)-2,3,4,5-tetrahydrodipicolinate + NADP(+) + H2O = (2S,4S)-4-hydroxy-2,3,4,5-tetrahydrodipicolinate + NADPH + H(+). It participates in amino-acid biosynthesis; L-lysine biosynthesis via DAP pathway; (S)-tetrahydrodipicolinate from L-aspartate: step 4/4. Its function is as follows. Catalyzes the conversion of 4-hydroxy-tetrahydrodipicolinate (HTPA) to tetrahydrodipicolinate. This is 4-hydroxy-tetrahydrodipicolinate reductase from Clostridium botulinum (strain Eklund 17B / Type B).